Here is a 216-residue protein sequence, read N- to C-terminus: MRLRNKPWAKDKIAAYPQYVIPDPEARRGRWHELFGNDRPIHIEIGTGKGKFITEMAKLHPDVNFIGIELYPSVLVSALDKLIESELPNVRLLNANAKDLTSFFADGEIARIYLNFSDPWPKKRHEKRRLTYRDFLALYDRILSADGDIHLKTDNQSFFEYSLVSLSQYGFVLAAVQLDLHRSDIVGNVMTEYEEKFSAKGNRIYRCEALRPPQQS.

Glutamate 44, glutamate 69, asparagine 96, and aspartate 118 together coordinate S-adenosyl-L-methionine. Residue aspartate 118 is part of the active site. Substrate is bound at residue lysine 122. Residues 124 to 129 form an interaction with RNA region; the sequence is RHEKRR. Substrate contacts are provided by residues aspartate 154 and 191–194; that span reads TEYE.

The protein belongs to the class I-like SAM-binding methyltransferase superfamily. TrmB family.

It carries out the reaction guanosine(46) in tRNA + S-adenosyl-L-methionine = N(7)-methylguanosine(46) in tRNA + S-adenosyl-L-homocysteine. It functions in the pathway tRNA modification; N(7)-methylguanine-tRNA biosynthesis. Its function is as follows. Catalyzes the formation of N(7)-methylguanine at position 46 (m7G46) in tRNA. In Geobacillus thermodenitrificans (strain NG80-2), this protein is tRNA (guanine-N(7)-)-methyltransferase.